The chain runs to 396 residues: Metallophosphoesterase 1 (396 aa).

The helical transmembrane segment at 28-48 threads the bilayer; it reads TVVIISVLLFCEYFIYYLVLF. D75, D117, N155, H249, H303, and H305 together coordinate a divalent metal cation. Residues 356–376 form a helical membrane-spanning segment; the sequence is TVLTMYGAAAGFLMILILVHF.

The protein belongs to the metallophosphoesterase superfamily. MPPE1 family. Interacts with GPI-anchor proteins (via the GPI portion). Interacts with TMED10. Mn(2+) is required as a cofactor.

It localises to the endoplasmic reticulum-Golgi intermediate compartment membrane. Its function is as follows. Metallophosphoesterase that catalyzes the removal of a side-chain ethanolamine-phosphate (EtNP) from the second mannose of the GPI-anchor protein intermediate. Participates in the glycan remodeling steps of GPI-anchor maturation to allow an efficient transport of GPI-anchor proteins from the endoplasmic reticulum to the Golgi. The chain is Metallophosphoesterase 1 from Mus musculus (Mouse).